Consider the following 322-residue polypeptide: Zinc finger C2HC domain-containing protein zchc-1A (322 aa).

C2HC/C3H-type zinc fingers lie at residues 9 to 38 and 119 to 148; these read PTFP…LASL and DYVQ…QATR. 8 residues coordinate Zn(2+): C13, C16, H28, C32, C123, C126, H138, and C142. Positions 150 to 159 are enriched in polar residues; sequence QGGNLKSSGG. The tract at residues 150-322 is disordered; sequence QGGNLKSSGG…SRNNSRSRIF (173 aa). Basic and acidic residues predominate over residues 174-220; it reads NEGKKQESSSRNGSAERKPTTRGRDGSLLRARRDDSNDITSRRKSLD. 2 stretches are compositionally biased toward polar residues: residues 221-238 and 264-274; these read TRTS…TSLS and LQQSSTPQQRL. Low complexity predominate over residues 276–295; sequence TPASTTTTASRSGSRTSSRA. Over residues 296-305 the composition is skewed to basic and acidic residues; that stretch reads CPRDDSRDSR. Low complexity predominate over residues 311–322; that stretch reads NNSRNNSRSRIF.

This sequence belongs to the ZC2HC1 family. Zn(2+) serves as cofactor.

The protein is Zinc finger C2HC domain-containing protein zchc-1A of Caenorhabditis elegans.